We begin with the raw amino-acid sequence, 277 residues long: Zaragozic acid A biosynthesis cluster protein 1 (277 aa).

It functions in the pathway secondary metabolite biosynthesis. Part of the gene cluster that mediates the biosynthesis of squalestatin S1 (SQS1, also known as zaragozic acid A), a heavily oxidized fungal polyketide that offers potent cholesterol lowering activity by targeting squalene synthase (SS). SQS1 is composed of a 2,8-dioxobicyclic[3.2.1]octane-3,4,5-tricarboxyclic acid core that is connected to two lipophilic polyketide arms. These initial steps feature the priming of an unusual benzoic acid starter unit onto the highly reducing polyketide synthase clz14, followed by oxaloacetate extension and product release to generate a tricarboxylic acid containing product. The phenylalanine ammonia lyase (PAL) clz10 and the acyl-CoA ligase clz12 are involved in transforming phenylalanine into benzoyl-CoA. The citrate synthase-like protein clz17 is involved in connecting the C-alpha-carbons of the hexaketide chain and oxaloacetate to afford the tricarboxylic acid unit. The potential hydrolytic enzymes, clz11 and clz13, are in close proximity to pks2 and may participate in product release. On the other side, the tetraketide arm is synthesized by a the squalestatin tetraketide synthase clz2 and enzymatically esterified to the core in the last biosynthetic step, by the acetyltransferase clz6. The biosynthesis of the tetraketide must involve 3 rounds of chain extension. After the first and second rounds methyl-transfer occurs, and in all rounds of extension the ketoreductase and dehydratase are active. The enoyl reductase and C-MeT of clz2 are not active in the final round of extension. The acetyltransferase clz6 appears to have a broad substrate selectivity for its acyl CoA substrate, allowing the in vitro synthesis of novel squalestatins. The biosynthesis of SQS1 requires several oxidative steps likely performed by oxidoreductases clz3, clz15 and clz16. Finally, in support of the identification of the cluster as being responsible for SQS1 production, the cluster contains a gene encoding a putative squalene synthase (SS) clz20, suggesting a likely mechanism for self-resistance. This Cochliobolus lunatus (Filamentous fungus) protein is Zaragozic acid A biosynthesis cluster protein 1.